Reading from the N-terminus, the 385-residue chain is Putative UDP-N-acetylglucosamine 2-epimerase (385 aa).

Belongs to the UDP-N-acetylglucosamine 2-epimerase family.

The protein localises to the cytoplasm. The enzyme catalyses UDP-N-acetyl-alpha-D-glucosamine = UDP-N-acetyl-alpha-D-mannosamine. This is Putative UDP-N-acetylglucosamine 2-epimerase from Clostridium acetobutylicum (strain ATCC 824 / DSM 792 / JCM 1419 / IAM 19013 / LMG 5710 / NBRC 13948 / NRRL B-527 / VKM B-1787 / 2291 / W).